The chain runs to 869 residues: Probable beta-glucosidase F (869 aa).

The N-terminal stretch at methionine 1–serine 19 is a signal peptide. Residues asparagine 77 and asparagine 261 are each glycosylated (N-linked (GlcNAc...) asparagine). Aspartate 289 is an active-site residue. 4 N-linked (GlcNAc...) asparagine glycosylation sites follow: asparagine 332, asparagine 364, asparagine 399, and asparagine 478. The tract at residues serine 677 to proline 697 is disordered. Residues proline 681–threonine 691 show a composition bias toward pro residues. N-linked (GlcNAc...) asparagine glycosylation is present at asparagine 728.

Belongs to the glycosyl hydrolase 3 family.

It localises to the secreted. The catalysed reaction is Hydrolysis of terminal, non-reducing beta-D-glucosyl residues with release of beta-D-glucose.. Its pathway is glycan metabolism; cellulose degradation. Functionally, beta-glucosidases are one of a number of cellulolytic enzymes involved in the degradation of cellulosic biomass. Catalyzes the last step releasing glucose from the inhibitory cellobiose. This Aspergillus fumigatus (strain CBS 144.89 / FGSC A1163 / CEA10) (Neosartorya fumigata) protein is Probable beta-glucosidase F (bglF).